Here is a 364-residue protein sequence, read N- to C-terminus: Fructose-bisphosphate aldolase B (364 aa).

Ala2 carries the post-translational modification N-acetylalanine. Lys13 carries the post-translational modification N6-succinyllysine. At Ser36 the chain carries Phosphoserine. Residue Thr39 is modified to Phosphothreonine. Arg43 lines the beta-D-fructose 1,6-bisphosphate pocket. Ser89 bears the Phosphoserine mark. Thr119 carries the post-translational modification Phosphothreonine. Lys121 carries the N6-succinyllysine modification. Ser132 carries the post-translational modification Phosphoserine. The active-site Proton acceptor is the Glu188. Position 206 is a phosphoserine (Ser206). Lys230 acts as the Schiff-base intermediate with dihydroxyacetone-P in catalysis. A phosphoserine mark is found at Ser272, Ser276, Ser299, and Ser301. Beta-D-fructose 1,6-bisphosphate is bound at residue Ser272–Gly274. Arg304 is a binding site for beta-D-fructose 1,6-bisphosphate. Phosphoserine is present on Ser309. At Lys317 the chain carries N6-succinyllysine.

Belongs to the class I fructose-bisphosphate aldolase family. In terms of assembly, homotetramer. Interacts with BBS1, BBS2, BBS4 and BBS7. Forms a ternary complex with G6PD and TP53; this interaction is direct.

The protein localises to the cytoplasm. Its subcellular location is the cytosol. It localises to the cytoskeleton. The protein resides in the microtubule organizing center. It is found in the centrosome. The protein localises to the centriolar satellite. It catalyses the reaction beta-D-fructose 1,6-bisphosphate = D-glyceraldehyde 3-phosphate + dihydroxyacetone phosphate. It carries out the reaction beta-D-fructose 1-phosphate = D-glyceraldehyde + dihydroxyacetone phosphate. It functions in the pathway carbohydrate degradation; glycolysis; D-glyceraldehyde 3-phosphate and glycerone phosphate from D-glucose: step 4/4. The protein operates within carbohydrate biosynthesis; gluconeogenesis. It participates in carbohydrate metabolism; fructose metabolism. Functionally, catalyzes the aldol cleavage of fructose 1,6-biphosphate to form two triosephosphates dihydroxyacetone phosphate and D-glyceraldehyde 3-phosphate in glycolysis as well as the reverse stereospecific aldol addition reaction in gluconeogenesis. In fructolysis, metabolizes fructose 1-phosphate derived from the phosphorylation of dietary fructose by fructokinase into dihydroxyacetone phosphate and D-glyceraldehyde. Acts as an adapter independently of its enzymatic activity, exerts a tumor suppressor role by stabilizing the ternary complex with G6PD and TP53 to inhibit G6PD activity and keep oxidative pentose phosphate metabolism in check. This is Fructose-bisphosphate aldolase B from Mus musculus (Mouse).